The chain runs to 124 residues: MKFQFVTALALASTMAVAAPINDQQEVLGAVAATRSKREGGSTGAELQDNNQPTAGLFGDGNSFGNQGLGGFLAATVDSLTKTIASPIKGILAPGGGSGGNGGSGGSGAAGGVGNLFSGILGGL.

A signal peptide spans 1–18; that stretch reads MKFQFVTALALASTMAVA. Positions 38–59 are disordered; the sequence is REGGSTGAELQDNNQPTAGLFG. Ser-107 carries the GPI-anchor amidated serine lipid modification. Residues 108-124 constitute a propeptide, removed in mature form; the sequence is GAAGGVGNLFSGILGGL.

The protein localises to the cell membrane. This chain is Predicted GPI-anchored protein 11 (PGA11), found in Candida albicans (strain SC5314 / ATCC MYA-2876) (Yeast).